The primary structure comprises 269 residues: MVRVAIAGAAGRMGRNLIKAVNGSQYAVLAAASEHPESSLIGVDVGEMAGLGKSGIVIVDDLAKAVDDFDVIIDFTLPISTLKNIELCQEHNKAIVIGTTGFSEPGKELIDQAAKEIPIVMAPNYSVGVNVVFKLLEKAAKIMGDYCDIEIIEAHHRYKVDAPSGTAIGMGEAIAGAMGNKLDDVAVYTREGITGERTKNEIGFATIRAGDIVGEHTAMFADIGERVEITHKATDRMTFANGAVRASHWLHQKSPGFYTMHDVLDLDQI.

Residues 8–13 (GAAGRM), E34, 98–100 (GTT), and 122–125 (APNY) each bind NAD(+). H155 (proton donor/acceptor) is an active-site residue. H156 is a binding site for (S)-2,3,4,5-tetrahydrodipicolinate. Catalysis depends on K159, which acts as the Proton donor. 165-166 (GT) is a binding site for (S)-2,3,4,5-tetrahydrodipicolinate.

Belongs to the DapB family.

The protein resides in the cytoplasm. It catalyses the reaction (S)-2,3,4,5-tetrahydrodipicolinate + NAD(+) + H2O = (2S,4S)-4-hydroxy-2,3,4,5-tetrahydrodipicolinate + NADH + H(+). It carries out the reaction (S)-2,3,4,5-tetrahydrodipicolinate + NADP(+) + H2O = (2S,4S)-4-hydroxy-2,3,4,5-tetrahydrodipicolinate + NADPH + H(+). Its pathway is amino-acid biosynthesis; L-lysine biosynthesis via DAP pathway; (S)-tetrahydrodipicolinate from L-aspartate: step 4/4. In terms of biological role, catalyzes the conversion of 4-hydroxy-tetrahydrodipicolinate (HTPA) to tetrahydrodipicolinate. In Aliivibrio salmonicida (strain LFI1238) (Vibrio salmonicida (strain LFI1238)), this protein is 4-hydroxy-tetrahydrodipicolinate reductase.